We begin with the raw amino-acid sequence, 319 residues long: Serine/threonine-protein phosphatase PP1 isozyme 2 (319 aa).

Mn(2+)-binding residues include Asp61, His63, Asp89, and Asn121. Catalysis depends on His122, which acts as the Proton donor. 2 residues coordinate Mn(2+): His170 and His245.

This sequence belongs to the PPP phosphatase family. PP-1 subfamily. Mn(2+) is required as a cofactor.

It carries out the reaction O-phospho-L-seryl-[protein] + H2O = L-seryl-[protein] + phosphate. The enzyme catalyses O-phospho-L-threonyl-[protein] + H2O = L-threonyl-[protein] + phosphate. This Acetabularia peniculus (Green alga) protein is Serine/threonine-protein phosphatase PP1 isozyme 2.